Here is a 423-residue protein sequence, read N- to C-terminus: Gamma-glutamyl phosphate reductase (423 aa).

This sequence belongs to the gamma-glutamyl phosphate reductase family.

Its subcellular location is the cytoplasm. The catalysed reaction is L-glutamate 5-semialdehyde + phosphate + NADP(+) = L-glutamyl 5-phosphate + NADPH + H(+). Its pathway is amino-acid biosynthesis; L-proline biosynthesis; L-glutamate 5-semialdehyde from L-glutamate: step 2/2. Its function is as follows. Catalyzes the NADPH-dependent reduction of L-glutamate 5-phosphate into L-glutamate 5-semialdehyde and phosphate. The product spontaneously undergoes cyclization to form 1-pyrroline-5-carboxylate. This chain is Gamma-glutamyl phosphate reductase, found in Pseudomonas putida (strain ATCC 47054 / DSM 6125 / CFBP 8728 / NCIMB 11950 / KT2440).